A 456-amino-acid polypeptide reads, in one-letter code: Gamma-aminobutyric acid receptor subunit alpha-1 (456 aa).

The N-terminal stretch at 1–27 (MRKSPGLSDCLWAWILLLSTLTGRSYG) is a signal peptide. The Extracellular segment spans residues 28–253 (QPSLQDELKD…FHLKRKIGYF (226 aa)). Asn-38 carries N-linked (GlcNAc...) asparagine glycosylation. Arg-94 serves as a coordination point for 4-aminobutanoate. An N-linked (GlcNAc...) asparagine glycan is attached at Asn-138. Thr-157 is a 4-aminobutanoate binding site. Cys-166 and Cys-180 are joined by a disulfide. Residues 254 to 274 (VIQTYLPCIMTVILSQVSFWL) traverse the membrane as a helical segment. Trp-273 is a 3alpha-hydroxy-5alpha-pregnan-11,20-dione binding site. Topologically, residues 275-279 (NRESV) are cytoplasmic. A helical membrane pass occupies residues 280 to 301 (PARTVFGVTTVLTMTTLSISAR). Topologically, residues 302 to 311 (NSLPKVAYAT) are extracellular. Residues 312–333 (AMDWFIAVCYAFVFSALIEFAT) form a helical membrane-spanning segment. Topologically, residues 334–421 (VNYFTKRGYA…TFNSVSKIDR (88 aa)) are cytoplasmic. Residues 422 to 441 (LSRIAFPLLFGIFNLVYWAT) form a helical membrane-spanning segment. The Extracellular segment spans residues 442-456 (YLNREPQLKAPTPHQ).

This sequence belongs to the ligand-gated ion channel (TC 1.A.9) family. Gamma-aminobutyric acid receptor (TC 1.A.9.5) subfamily. GABRA1 sub-subfamily. Heteropentamer, formed by a combination of alpha (GABRA1-6), beta (GABRB1-3), gamma (GABRG1-3), delta (GABRD), epsilon (GABRE), rho (GABRR1-3), pi (GABRP) and theta (GABRQ) subunits, each subunit exhibiting distinct physiological and pharmacological properties. Interacts with UBQLN1. Interacts with TRAK1. Interacts with KIF21B. Identified in a complex of 720 kDa composed of LHFPL4, NLGN2, GABRA1, GABRB2, GABRG2 and GABRB3. Interacts with LHFPL4. Interacts with NLGN2. Interacts with SHISA7; interaction leads regulation of GABAAR trafficking, channel deactivation kinetics and pharmacology.

The protein localises to the postsynaptic cell membrane. Its subcellular location is the cell membrane. It localises to the cytoplasmic vesicle membrane. It catalyses the reaction chloride(in) = chloride(out). Its activity is regulated as follows. Allosterically activated by benzodiazepines and the anesthetic alphaxalone. Allosterically activated by pentobarbital. Inhibited by the antagonist bicuculline. Potentiated by histamine. Alpha subunit of the heteropentameric ligand-gated chloride channel gated by Gamma-aminobutyric acid (GABA), a major inhibitory neurotransmitter in the brain. GABA-gated chloride channels, also named GABA(A) receptors (GABAAR), consist of five subunits arranged around a central pore and contain GABA active binding site(s) located at the alpha and beta subunit interface(s). When activated by GABA, GABAARs selectively allow the flow of chloride anions across the cell membrane down their electrochemical gradient. Alpha-1/GABRA1-containing GABAARs are largely synaptic. Chloride influx into the postsynaptic neuron following GABAAR opening decreases the neuron ability to generate a new action potential, thereby reducing nerve transmission. GABAARs containing alpha-1 and beta-2 or -3 subunits exhibit synaptogenic activity; the gamma-2 subunit being necessary but not sufficient to induce rapid synaptic contacts formation. GABAARs function also as histamine receptor where histamine binds at the interface of two neighboring beta subunits and potentiates GABA response. GABAARs containing alpha, beta and epsilon subunits also permit spontaneous chloride channel activity while preserving the structural information required for GABA-gated openings. Alpha-1-mediated plasticity in the orbitofrontal cortex regulates context-dependent action selection. Together with rho subunits, may also control neuronal and glial GABAergic transmission in the cerebellum. The polypeptide is Gamma-aminobutyric acid receptor subunit alpha-1 (Homo sapiens (Human)).